We begin with the raw amino-acid sequence, 142 residues long: Small ribosomal subunit protein bS18m (142 aa).

Belongs to the bacterial ribosomal protein bS18 family. In terms of assembly, component of the mitochondrial small ribosomal subunit (mt-SSU). Mature mammalian 55S mitochondrial ribosomes consist of a small (28S) and a large (39S) subunit. The 28S small subunit contains a 12S ribosomal RNA (12S mt-rRNA) and 30 different proteins. The 39S large subunit contains a 16S rRNA (16S mt-rRNA), a copy of mitochondrial valine transfer RNA (mt-tRNA(Val)), which plays an integral structural role, and 52 different proteins. bS18m has a zinc binding site.

The protein resides in the mitochondrion. The chain is Small ribosomal subunit protein bS18m (MRPS18C) from Homo sapiens (Human).